The primary structure comprises 279 residues: Shikimate dehydrogenase (NADP(+)) (279 aa).

Shikimate is bound by residues 21–23 (SMS) and T68. K72 functions as the Proton acceptor in the catalytic mechanism. Shikimate-binding residues include N93 and D108. NADP(+) is bound by residues 130–134 (GAGGA) and L219. Y221 provides a ligand contact to shikimate. G242 is a binding site for NADP(+).

This sequence belongs to the shikimate dehydrogenase family. In terms of assembly, homodimer.

The catalysed reaction is shikimate + NADP(+) = 3-dehydroshikimate + NADPH + H(+). It functions in the pathway metabolic intermediate biosynthesis; chorismate biosynthesis; chorismate from D-erythrose 4-phosphate and phosphoenolpyruvate: step 4/7. In terms of biological role, involved in the biosynthesis of the chorismate, which leads to the biosynthesis of aromatic amino acids. Catalyzes the reversible NADPH linked reduction of 3-dehydroshikimate (DHSA) to yield shikimate (SA). The polypeptide is Shikimate dehydrogenase (NADP(+)) (Oleidesulfovibrio alaskensis (strain ATCC BAA-1058 / DSM 17464 / G20) (Desulfovibrio alaskensis)).